A 398-amino-acid polypeptide reads, in one-letter code: Carboxyaminopropylagmatine dehydrogenase (398 aa).

It belongs to the saccharopine dehydrogenase family.

The enzyme catalyses N(1)-[(S)-3-amino-3-carboxypropyl]agmatine + NADP(+) + H2O = L-aspartate 4-semialdehyde + agmatine + NADPH + H(+). The protein operates within amine and polyamine biosynthesis; spermidine biosynthesis. In terms of biological role, dehydrogenase involved in the biosynthesis of spermidine via the carboxyaminopropylagmatine (CAPA) pathway. Catalyzes the reductive condensation of agmatine and L-aspartate-beta-semialdehyde (ASA) into CAPA. Shows activity toward putrescine and 1,3-diaminopropane, but the catalytic efficiency is three to four orders of magnitude lower than that for agmatine. Cannot use cadaverine or spermidine. This chain is Carboxyaminopropylagmatine dehydrogenase, found in Synechocystis sp. (strain ATCC 27184 / PCC 6803 / Kazusa).